Here is a 293-residue protein sequence, read N- to C-terminus: Elongation factor Ts (293 aa).

An involved in Mg(2+) ion dislocation from EF-Tu region spans residues 79–82 (TDFV).

This sequence belongs to the EF-Ts family.

The protein resides in the cytoplasm. Its function is as follows. Associates with the EF-Tu.GDP complex and induces the exchange of GDP to GTP. It remains bound to the aminoacyl-tRNA.EF-Tu.GTP complex up to the GTP hydrolysis stage on the ribosome. In Macrococcus caseolyticus (strain JCSC5402) (Macrococcoides caseolyticum), this protein is Elongation factor Ts.